The primary structure comprises 443 residues: Probable D-serine dehydratase (443 aa).

Lys-118 bears the N6-(pyridoxal phosphate)lysine mark.

It belongs to the serine/threonine dehydratase family. DsdA subfamily. Pyridoxal 5'-phosphate is required as a cofactor.

The enzyme catalyses D-serine = pyruvate + NH4(+). The chain is Probable D-serine dehydratase from Aeromonas salmonicida (strain A449).